The primary structure comprises 169 residues: Large ribosomal subunit protein uL18 (169 aa).

The protein belongs to the universal ribosomal protein uL18 family. In terms of assembly, part of the 50S ribosomal subunit. Contacts the 5S and 23S rRNAs.

This is one of the proteins that bind and probably mediate the attachment of the 5S RNA into the large ribosomal subunit, where it forms part of the central protuberance. The polypeptide is Large ribosomal subunit protein uL18 (Methanothrix thermoacetophila (strain DSM 6194 / JCM 14653 / NBRC 101360 / PT) (Methanosaeta thermophila)).